Here is a 265-residue protein sequence, read N- to C-terminus: 4-hydroxy-tetrahydrodipicolinate reductase (265 aa).

NAD(+)-binding positions include 7 to 12 (GASGRM) and Asp-33. Arg-34 contributes to the NADP(+) binding site. NAD(+) is bound by residues 96–98 (GTT) and 120–123 (AANM). His-153 functions as the Proton donor/acceptor in the catalytic mechanism. His-154 is a binding site for (S)-2,3,4,5-tetrahydrodipicolinate. Lys-157 serves as the catalytic Proton donor. Position 163-164 (163-164 (GT)) interacts with (S)-2,3,4,5-tetrahydrodipicolinate.

The protein belongs to the DapB family.

It localises to the cytoplasm. It carries out the reaction (S)-2,3,4,5-tetrahydrodipicolinate + NAD(+) + H2O = (2S,4S)-4-hydroxy-2,3,4,5-tetrahydrodipicolinate + NADH + H(+). The enzyme catalyses (S)-2,3,4,5-tetrahydrodipicolinate + NADP(+) + H2O = (2S,4S)-4-hydroxy-2,3,4,5-tetrahydrodipicolinate + NADPH + H(+). The protein operates within amino-acid biosynthesis; L-lysine biosynthesis via DAP pathway; (S)-tetrahydrodipicolinate from L-aspartate: step 4/4. Catalyzes the conversion of 4-hydroxy-tetrahydrodipicolinate (HTPA) to tetrahydrodipicolinate. The chain is 4-hydroxy-tetrahydrodipicolinate reductase from Burkholderia orbicola (strain AU 1054).